Consider the following 191-residue polypeptide: Fe/S biogenesis protein NfuA (191 aa).

[4Fe-4S] cluster contacts are provided by Cys149 and Cys152.

It belongs to the NfuA family. Homodimer. The cofactor is [4Fe-4S] cluster.

Its function is as follows. Involved in iron-sulfur cluster biogenesis. Binds a 4Fe-4S cluster, can transfer this cluster to apoproteins, and thereby intervenes in the maturation of Fe/S proteins. Could also act as a scaffold/chaperone for damaged Fe/S proteins. In Erwinia tasmaniensis (strain DSM 17950 / CFBP 7177 / CIP 109463 / NCPPB 4357 / Et1/99), this protein is Fe/S biogenesis protein NfuA.